A 662-amino-acid polypeptide reads, in one-letter code: U6 snRNA-specific terminal uridylyltransferase (662 aa).

Mg(2+) contacts are provided by Asp183 and Asp185. The PAP-associated domain occupies 384-437; it reads CKFFRELFKYYANFDFTNKAIYGKKAMQKKTLSSAHGGVEESPLMLMDPMDITH.

This sequence belongs to the DNA polymerase type-B-like family. In terms of assembly, forms a complex composed of sart-3, terminal uridylyltransferase usip-1 and U6 snRNA; complex formation is mediated by usip-1 and sart-3 binding to U6 snRNA. The cofactor is Mg(2+). Mn(2+) serves as cofactor. Ubiquitously expressed.

The protein resides in the nucleus. It is found in the nucleoplasm. It carries out the reaction RNA(n) + UTP = RNA(n)-3'-uridine ribonucleotide + diphosphate. Functionally, acts as a specific terminal uridylyltransferase for U6 snRNA. Responsible for the addition of UTP at the 3' end of U6 snRNA which stabilizes U6 snRNA. Does not have activity towards modified uridine containing 3'-monophosphorylation or 2'-O-methylation. In Caenorhabditis elegans, this protein is U6 snRNA-specific terminal uridylyltransferase.